Here is a 109-residue protein sequence, read N- to C-terminus: uncharacterized protein (109 aa).

This is an uncharacterized protein from Microplitis demolitor bracovirus (isolate Webb) (MdBV).